We begin with the raw amino-acid sequence, 306 residues long: Glutaminase (306 aa).

Residues Ser-64, Asn-115, Glu-159, Asn-166, Tyr-190, Tyr-242, and Val-260 each contribute to the substrate site.

The protein belongs to the glutaminase family. Homotetramer.

It catalyses the reaction L-glutamine + H2O = L-glutamate + NH4(+). This is Glutaminase from Aliivibrio fischeri (strain ATCC 700601 / ES114) (Vibrio fischeri).